Reading from the N-terminus, the 154-residue chain is Myoglobin (154 aa).

In terms of domain architecture, Globin spans 2–148; it reads GLSDGEWQLV…FRKDIAAKYK (147 aa). S4 bears the Phosphoserine mark. H65 lines the nitrite pocket. Position 65 (H65) interacts with O2. T68 carries the post-translational modification Phosphothreonine. Residue H94 participates in heme b binding.

It belongs to the globin family. As to quaternary structure, monomeric.

It is found in the cytoplasm. The protein localises to the sarcoplasm. It carries out the reaction Fe(III)-heme b-[protein] + nitric oxide + H2O = Fe(II)-heme b-[protein] + nitrite + 2 H(+). The catalysed reaction is H2O2 + AH2 = A + 2 H2O. Monomeric heme protein which primary function is to store oxygen and facilitate its diffusion within muscle tissues. Reversibly binds oxygen through a pentacoordinated heme iron and enables its timely and efficient release as needed during periods of heightened demand. Depending on the oxidative conditions of tissues and cells, and in addition to its ability to bind oxygen, it also has a nitrite reductase activity whereby it regulates the production of bioactive nitric oxide. Under stress conditions, like hypoxia and anoxia, it also protects cells against reactive oxygen species thanks to its pseudoperoxidase activity. The polypeptide is Myoglobin (MB) (Orcinus orca (Killer whale)).